The primary structure comprises 197 residues: Phosphoheptose isomerase (197 aa).

Residues 36–197 enclose the SIS domain; that stretch reads MVNALLNEGK…IDSQLFGSEE (162 aa). Position 51-53 (51-53) interacts with substrate; it reads NGG. Zn(2+) contacts are provided by His60 and Glu64. Substrate contacts are provided by residues Glu64, 93–94, 119–121, Ser124, and Gln174; these read ND and STS. The Zn(2+) site is built by Gln174 and His182.

The protein belongs to the SIS family. GmhA subfamily. As to quaternary structure, homotetramer. The cofactor is Zn(2+).

The protein localises to the cytoplasm. The catalysed reaction is 2 D-sedoheptulose 7-phosphate = D-glycero-alpha-D-manno-heptose 7-phosphate + D-glycero-beta-D-manno-heptose 7-phosphate. The protein operates within carbohydrate biosynthesis; D-glycero-D-manno-heptose 7-phosphate biosynthesis; D-glycero-alpha-D-manno-heptose 7-phosphate and D-glycero-beta-D-manno-heptose 7-phosphate from sedoheptulose 7-phosphate: step 1/1. Its function is as follows. Catalyzes the isomerization of sedoheptulose 7-phosphate in D-glycero-D-manno-heptose 7-phosphate. This chain is Phosphoheptose isomerase, found in Pseudomonas putida (strain GB-1).